The sequence spans 276 residues: Alpha N-terminal protein methyltransferase 1 (276 aa).

Residues 1–57 (MTTTLEEQLSDKLQMMDETTDKVQGSSKQKDDSSIAASSDAKTASPSSSDSSTKVAA) form a disordered region. Residues 34–57 (SIAASSDAKTASPSSSDSSTKVAA) are compositionally biased toward low complexity. Residues glycine 114, arginine 119, 136–138 (EQD), 167–168 (LQ), and glutamine 182 each bind S-adenosyl-L-methionine.

This sequence belongs to the methyltransferase superfamily. NTM1 family.

It carries out the reaction N-terminal L-alanyl-L-prolyl-L-lysyl-[protein] + 3 S-adenosyl-L-methionine = N-terminal N,N,N-trimethyl-L-alanyl-L-prolyl-L-lysyl-[protein] + 3 S-adenosyl-L-homocysteine + 3 H(+). It catalyses the reaction N-terminal L-seryl-L-prolyl-L-lysyl-[protein] + 3 S-adenosyl-L-methionine = N-terminal N,N,N-trimethyl-L-seryl-L-prolyl-L-lysyl-[protein] + 3 S-adenosyl-L-homocysteine + 3 H(+). The catalysed reaction is N-terminal L-prolyl-L-prolyl-L-lysyl-[protein] + 2 S-adenosyl-L-methionine = N-terminal N,N-dimethyl-L-prolyl-L-prolyl-L-lysyl-[protein] + 2 S-adenosyl-L-homocysteine + 2 H(+). Functionally, alpha-N-methyltransferase that methylates the N-terminus of target proteins containing the N-terminal motif [Ala/Pro/Ser]-Pro-Lys when the initiator Met is cleaved. Specifically catalyzes mono-, di- or tri-methylation of exposed alpha-amino group of Ala or Ser residue in the [Ala/Ser]-Pro-Lys motif and mono- or di-methylation of Pro in the Pro-Pro-Lys motif. In Drosophila melanogaster (Fruit fly), this protein is Alpha N-terminal protein methyltransferase 1 (Ntmt).